The primary structure comprises 289 residues: Oxaloacetate decarboxylase (289 aa).

S50 is a substrate binding site. Residue D88 coordinates Mg(2+). The substrate site is built by R159 and H235.

This sequence belongs to the isocitrate lyase family. Oxaloacetate decarboxylase subfamily. In terms of assembly, homotetramer; dimer of dimers. Mg(2+) is required as a cofactor.

The catalysed reaction is oxaloacetate + H(+) = pyruvate + CO2. Functionally, catalyzes the decarboxylation of oxaloacetate into pyruvate. Seems to play a role in maintaining cellular concentrations of bicarbonate and pyruvate. In Pseudomonas fluorescens (strain SBW25), this protein is Oxaloacetate decarboxylase.